Here is a 115-residue protein sequence, read N- to C-terminus: U3-lycotoxin-Ls1k (115 aa).

The N-terminal stretch at 1–20 (MKSVLLFGVLLVTLFSYSSA) is a signal peptide. The propeptide occupies 21 to 44 (EMLDDFDQADEDELLSLIEKEEAR). 4 cysteine pairs are disulfide-bonded: cysteine 48–cysteine 63, cysteine 55–cysteine 72, cysteine 62–cysteine 87, and cysteine 74–cysteine 85.

The protein belongs to the neurotoxin 19 (CSTX) family. 01 subfamily. Expressed by the venom gland.

It is found in the secreted. In Lycosa singoriensis (Wolf spider), this protein is U3-lycotoxin-Ls1k.